A 331-amino-acid polypeptide reads, in one-letter code: Glyoxylate reductase (331 aa).

NADP(+)-binding positions include Phe158 to Ile161, Ser180 to Thr182, and Thr239 to Arg241. Residues Arg241 and Glu270 contribute to the active site. The active-site Proton donor is His288. His288–Gly290 is a binding site for NADP(+).

The protein belongs to the D-isomer specific 2-hydroxyacid dehydrogenase family. GyaR subfamily. Homodimer.

It is found in the cytoplasm. The catalysed reaction is glycolate + NAD(+) = glyoxylate + NADH + H(+). In Thermococcus litoralis (strain ATCC 51850 / DSM 5473 / JCM 8560 / NS-C), this protein is Glyoxylate reductase.